The primary structure comprises 477 residues: Nuclear receptor subfamily 6 group A member 1-A (477 aa).

Residues 40–115 (QRSCLICGDR…MGMNRKAIRE (76 aa)) constitute a DNA-binding region (nuclear receptor). NR C4-type zinc fingers lie at residues 43-63 (CLIC…CEGC) and 79-98 (CSRD…CQYC). Positions 147–187 (DEANMPEHTWGNNGDSDHSSPGNGVSDGNQPSPVSTLSSNR) are disordered. Over residues 156–187 (WGNNGDSDHSSPGNGVSDGNQPSPVSTLSSNR) the composition is skewed to polar residues. Positions 230–461 (QSHTLIGQLV…HSCKSSLSSY (232 aa)) constitute an NR LBD domain.

It belongs to the nuclear hormone receptor family. NR6 subfamily. As to quaternary structure, homodimer. Expressed in germ cells, being predominant in previtellogenic oocytes in the ovary and in spermatocytes in the testis.

It localises to the nucleus. Functionally, probable orphan nuclear receptor. Binds to a response element containing repeats of the motif 5'-AGGTCA-3'. This is Nuclear receptor subfamily 6 group A member 1-A from Danio rerio (Zebrafish).